Consider the following 174-residue polypeptide: Methionine-R-sulfoxide reductase B2, mitochondrial (174 aa).

The N-terminal 61 residues, M1 to K61, are a transit peptide targeting the mitochondrion. Residues G62–S172 form the MsrB domain. Zn(2+) is bound by residues C82, C85, C138, and C141. The active-site Nucleophile is the C161.

This sequence belongs to the MsrB Met sulfoxide reductase family. Zn(2+) serves as cofactor.

It localises to the mitochondrion. The catalysed reaction is L-methionyl-[protein] + [thioredoxin]-disulfide + H2O = L-methionyl-(R)-S-oxide-[protein] + [thioredoxin]-dithiol. It catalyses the reaction [thioredoxin]-disulfide + L-methionine + H2O = L-methionine (R)-S-oxide + [thioredoxin]-dithiol. Functionally, methionine-sulfoxide reductase that specifically reduces methionine (R)-sulfoxide back to methionine. While in many cases, methionine oxidation is the result of random oxidation following oxidative stress, methionine oxidation is also a post-translational modification that takes place on specific residue. Upon oxidative stress, may play a role in the preservation of mitochondrial integrity by decreasing the intracellular reactive oxygen species build-up through its scavenging role, hence contributing to cell survival and protein maintenance. The polypeptide is Methionine-R-sulfoxide reductase B2, mitochondrial (Msrb2) (Rattus norvegicus (Rat)).